We begin with the raw amino-acid sequence, 327 residues long: Lipoyl synthase (327 aa).

[4Fe-4S] cluster is bound by residues cysteine 72, cysteine 77, cysteine 83, cysteine 98, cysteine 102, cysteine 105, and serine 313. One can recognise a Radical SAM core domain in the interval 83–302 (CWSHGTATIM…RKVGLEKGFL (220 aa)).

The protein belongs to the radical SAM superfamily. Lipoyl synthase family. It depends on [4Fe-4S] cluster as a cofactor.

Its subcellular location is the cytoplasm. The enzyme catalyses [[Fe-S] cluster scaffold protein carrying a second [4Fe-4S](2+) cluster] + N(6)-octanoyl-L-lysyl-[protein] + 2 oxidized [2Fe-2S]-[ferredoxin] + 2 S-adenosyl-L-methionine + 4 H(+) = [[Fe-S] cluster scaffold protein] + N(6)-[(R)-dihydrolipoyl]-L-lysyl-[protein] + 4 Fe(3+) + 2 hydrogen sulfide + 2 5'-deoxyadenosine + 2 L-methionine + 2 reduced [2Fe-2S]-[ferredoxin]. Its pathway is protein modification; protein lipoylation via endogenous pathway; protein N(6)-(lipoyl)lysine from octanoyl-[acyl-carrier-protein]: step 2/2. Its function is as follows. Catalyzes the radical-mediated insertion of two sulfur atoms into the C-6 and C-8 positions of the octanoyl moiety bound to the lipoyl domains of lipoate-dependent enzymes, thereby converting the octanoylated domains into lipoylated derivatives. The protein is Lipoyl synthase of Francisella tularensis subsp. mediasiatica (strain FSC147).